A 459-amino-acid polypeptide reads, in one-letter code: Sperm-tail PG-rich repeat-containing protein 2 (459 aa).

9 STPGR repeats span residues 21 to 30 (VGPGSYQVPF), 63 to 73 (PGPGHYNVSEA), 119 to 148 (TLGP…NSSG), 157 to 203 (GPGP…QEKK), 213 to 243 (TPAP…FGQS), 257 to 268 (PGPGFYNVLNNT), 351 to 377 (PAPG…PRSL), 400 to 410 (GPGPAAYNPVL), and 433 to 443 (TPGPATYEISQ).

The chain is Sperm-tail PG-rich repeat-containing protein 2 (STPG2) from Homo sapiens (Human).